The following is a 73-amino-acid chain: uncharacterized protein (73 aa).

This is an uncharacterized protein from Human cytomegalovirus (strain AD169) (HHV-5).